The sequence spans 141 residues: HTH-type transcriptional repressor NsrR (141 aa).

In terms of domain architecture, HTH rrf2-type spans 2 to 129 (QLTSFTDYGL…DNYTLADMVK (128 aa)). Residues 28-51 (ISQVTEVYGVSRNHMVKIINQLSR) constitute a DNA-binding region (H-T-H motif). [2Fe-2S] cluster contacts are provided by Cys-91, Cys-96, and Cys-102.

[2Fe-2S] cluster is required as a cofactor.

In terms of biological role, nitric oxide-sensitive repressor of genes involved in protecting the cell against nitrosative stress. May require iron for activity. This Yersinia pseudotuberculosis serotype O:1b (strain IP 31758) protein is HTH-type transcriptional repressor NsrR.